Here is a 278-residue protein sequence, read N- to C-terminus: Urease accessory protein UreD (278 aa).

The protein belongs to the UreD family. UreD, UreF and UreG form a complex that acts as a GTP-hydrolysis-dependent molecular chaperone, activating the urease apoprotein by helping to assemble the nickel containing metallocenter of UreC. The UreE protein probably delivers the nickel.

It localises to the cytoplasm. Required for maturation of urease via the functional incorporation of the urease nickel metallocenter. The sequence is that of Urease accessory protein UreD from Blochmanniella pennsylvanica (strain BPEN).